A 141-amino-acid polypeptide reads, in one-letter code: uncharacterized protein (141 aa).

Positions 1 to 17 are enriched in basic and acidic residues; sequence MNKSESENDSEYHKEYS. Residues 1–24 form a disordered region; that stretch reads MNKSESENDSEYHKEYSESSDPED. Positions 52–115 form a coiled coil; it reads IQNLNNNVKE…QMLFEKMRDM (64 aa).

This is an uncharacterized protein from Acanthamoeba polyphaga (Amoeba).